A 293-amino-acid polypeptide reads, in one-letter code: Mitochondrial glycine transporter (293 aa).

Solcar repeat units lie at residues 6 to 85, 102 to 186, and 208 to 291; these read GGVP…SRSA, LQSY…AKEM, and ASAM…LLKL. A run of 6 helical transmembrane segments spans residues 12–37, 60–86, 108–133, 161–184, 212–238, and 266–284; these read LVSG…TRLQ, GTLP…RSAL, LLTG…VRYE, GAAA…EQAK, VNGV…KTRM, and GLSL…AWGI.

The protein belongs to the mitochondrial carrier (TC 2.A.29) family. SLC25A38 subfamily.

It is found in the mitochondrion inner membrane. The enzyme catalyses glycine(in) = glycine(out). Mitochondrial glycine transporter that imports glycine into the mitochondrial matrix. Plays an important role in providing glycine for the first enzymatic step in heme biosynthesis, the condensation of glycine with succinyl-CoA to produce 5-aminolevulinate (ALA) in the mitochondrial matrix. The protein is Mitochondrial glycine transporter of Eremothecium gossypii (strain ATCC 10895 / CBS 109.51 / FGSC 9923 / NRRL Y-1056) (Yeast).